The chain runs to 67 residues: Large ribosomal subunit protein uL29 (67 aa).

It belongs to the universal ribosomal protein uL29 family.

The protein is Large ribosomal subunit protein uL29 of Gemmatimonas aurantiaca (strain DSM 14586 / JCM 11422 / NBRC 100505 / T-27).